A 274-amino-acid polypeptide reads, in one-letter code: Ribosomal RNA small subunit methyltransferase A (274 aa).

S-adenosyl-L-methionine contacts are provided by His15, Leu17, Gly42, Glu64, Asp89, and Asn109.

The protein belongs to the class I-like SAM-binding methyltransferase superfamily. rRNA adenine N(6)-methyltransferase family. RsmA subfamily.

It is found in the cytoplasm. It carries out the reaction adenosine(1518)/adenosine(1519) in 16S rRNA + 4 S-adenosyl-L-methionine = N(6)-dimethyladenosine(1518)/N(6)-dimethyladenosine(1519) in 16S rRNA + 4 S-adenosyl-L-homocysteine + 4 H(+). Functionally, specifically dimethylates two adjacent adenosines (A1518 and A1519) in the loop of a conserved hairpin near the 3'-end of 16S rRNA in the 30S particle. May play a critical role in biogenesis of 30S subunits. The protein is Ribosomal RNA small subunit methyltransferase A of Synechococcus sp. (strain CC9902).